The sequence spans 123 residues: Small ribosomal subunit protein uS12 (123 aa).

Positions M1 to S47 are disordered. Position 89 is a 3-methylthioaspartic acid (D89).

Belongs to the universal ribosomal protein uS12 family. As to quaternary structure, part of the 30S ribosomal subunit. Contacts proteins S8 and S17. May interact with IF1 in the 30S initiation complex.

Functionally, with S4 and S5 plays an important role in translational accuracy. Interacts with and stabilizes bases of the 16S rRNA that are involved in tRNA selection in the A site and with the mRNA backbone. Located at the interface of the 30S and 50S subunits, it traverses the body of the 30S subunit contacting proteins on the other side and probably holding the rRNA structure together. The combined cluster of proteins S8, S12 and S17 appears to hold together the shoulder and platform of the 30S subunit. The polypeptide is Small ribosomal subunit protein uS12 (Desulforapulum autotrophicum (strain ATCC 43914 / DSM 3382 / VKM B-1955 / HRM2) (Desulfobacterium autotrophicum)).